A 78-amino-acid chain; its full sequence is Large ribosomal subunit protein bL28 (78 aa).

Positions M1–N23 are disordered.

It belongs to the bacterial ribosomal protein bL28 family.

In Wigglesworthia glossinidia brevipalpis, this protein is Large ribosomal subunit protein bL28.